The following is a 111-amino-acid chain: Large ribosomal subunit protein uL22 (111 aa).

Belongs to the universal ribosomal protein uL22 family. Part of the 50S ribosomal subunit.

This protein binds specifically to 23S rRNA; its binding is stimulated by other ribosomal proteins, e.g. L4, L17, and L20. It is important during the early stages of 50S assembly. It makes multiple contacts with different domains of the 23S rRNA in the assembled 50S subunit and ribosome. Functionally, the globular domain of the protein is located near the polypeptide exit tunnel on the outside of the subunit, while an extended beta-hairpin is found that lines the wall of the exit tunnel in the center of the 70S ribosome. The chain is Large ribosomal subunit protein uL22 from Chlamydia caviae (strain ATCC VR-813 / DSM 19441 / 03DC25 / GPIC) (Chlamydophila caviae).